A 305-amino-acid polypeptide reads, in one-letter code: tRNA-splicing endonuclease (305 aa).

Residues Y246, H257, and K287 contribute to the active site.

Belongs to the tRNA-intron endonuclease family. Archaeal long subfamily. Homodimer.

It catalyses the reaction pretRNA = a 3'-half-tRNA molecule with a 5'-OH end + a 5'-half-tRNA molecule with a 2',3'-cyclic phosphate end + an intron with a 2',3'-cyclic phosphate and a 5'-hydroxyl terminus.. Functionally, endonuclease that removes tRNA introns. Cleaves pre-tRNA at the 5'- and 3'-splice sites to release the intron. The products are an intron and two tRNA half-molecules bearing 2',3' cyclic phosphate and 5'-OH termini. Recognizes a pseudosymmetric substrate in which 2 bulged loops of 3 bases are separated by a stem of 4 bp. The protein is tRNA-splicing endonuclease of Archaeoglobus fulgidus (strain ATCC 49558 / DSM 4304 / JCM 9628 / NBRC 100126 / VC-16).